A 3413-amino-acid chain; its full sequence is Protein pecanex (3413 aa).

2 consecutive transmembrane segments (helical) span residues 33 to 53 and 57 to 77; these read VVHLYLWLYLLCSPFVAYLYF and WLTWCLYCVITSLTILMVKLA. N-linked (GlcNAc...) asparagine glycosylation is present at Asn-164. A compositionally biased stretch (low complexity) spans 182-195; that stretch reads GSQQDQQSLAGSAS. Disordered regions lie at residues 182-213 and 235-314; these read GSQQDQQSLAGSASVSKSIRSTGPGGNSSTSA and GSSA…ENKL. The span at 196-213 shows a compositional bias: polar residues; sequence VSKSIRSTGPGGNSSTSA. An N-linked (GlcNAc...) asparagine glycan is attached at Asn-208. Low complexity predominate over residues 302 to 312; it reads AAAAANSNAEN. A glycan (N-linked (GlcNAc...) asparagine) is linked at Asn-317. 4 disordered regions span residues 327–363, 379–403, 540–609, and 625–651; these read PSFLHSQPTNKARGQTNPRQHFITSAPSTGIGGGDAP, LVNPGRSSRLQRHRSSETHDERLKH, PGTG…GTGG, and PSVSNLSPHPNSVEAISGQQQMRNPLP. A compositionally biased stretch (polar residues) spans 330–354; it reads LHSQPTNKARGQTNPRQHFITSAPS. Positions 392–402 are enriched in basic and acidic residues; it reads RSSETHDERLK. Over residues 541–559 the composition is skewed to gly residues; sequence GTGGSVTGGGGAAGGGGSA. 2 N-linked (GlcNAc...) asparagine glycosylation sites follow: Asn-569 and Asn-581. Polar residues predominate over residues 569–582; sequence NATSYKHGSSQSNK. The segment covering 599–609 has biased composition (gly residues); sequence GTSGGAGGTGG. The span at 625-634 shows a compositional bias: polar residues; sequence PSVSNLSPHP. N-linked (GlcNAc...) asparagine glycosylation occurs at Asn-685. The segment covering 720–730 has biased composition (basic and acidic residues); sequence EKTAHEEHGDD. Disordered stretches follow at residues 720 to 745, 816 to 873, 886 to 921, and 1002 to 1021; these read EKTAHEEHGDDCLGIGQGNADDDDEV, HHHS…NRQP, RQELSHQSGAVIPAPNPPVPIRSEADSGCPSSDCEQ, and KQTKQASRNSSSSNSTHSIS. A compositionally biased stretch (basic residues) spans 816–826; the sequence is HHHSHLHHHKA. The segment covering 828-846 has biased composition (low complexity); sequence SVEGAGPSGGSVAVGVSAG. The segment covering 847-856 has biased composition (acidic residues); that stretch reads NDDEDEETED. The N-linked (GlcNAc...) asparagine glycan is linked to Asn-857. A compositionally biased stretch (low complexity) spans 1008–1021; it reads SRNSSSSNSTHSIS. N-linked (GlcNAc...) asparagine glycans are attached at residues Asn-1010, Asn-1015, Asn-1069, and Asn-1199. The next 2 helical transmembrane spans lie at 1315–1335 and 1343–1363; these read MHVLLASLLCTLVACLGAAIL and LCALLFCAVIAGAQYSLVKSV. N-linked (GlcNAc...) asparagine glycosylation occurs at Asn-1375. A run of 4 helical transmembrane segments spans residues 1376–1396, 1423–1443, 1474–1494, and 1504–1524; these read KTVAYSRAIYFCLAGGMLLLL, VVALLLQALYILLLCFPIIFS, LLGSFLCVVRSVLAVMLLYGP, and GTQYILFSIFCAMLVPLGYHL. N-linked (GlcNAc...) asparagine glycosylation is present at Asn-1572. Disordered regions lie at residues 1577–1675, 1722–1744, and 1760–1813; these read QLTT…TGEP, DKISSSSATNPGDMSTLTAGAGT, and AEAE…LPDP. 2 stretches are compositionally biased toward basic and acidic residues: residues 1587 to 1598 and 1607 to 1620; these read RQTDVKTEHEQI and TVNEEHHEKDHGAD. The segment covering 1639–1666 has biased composition (low complexity); sequence KTSSLGSSQQTLGKTISSSKRAITASSS. Polar residues predominate over residues 1725–1738; that stretch reads SSSSATNPGDMSTL. 5 repeat units span residues 1776–1777, 1778–1779, 1780–1781, 1782–1783, and 1784–1785. The segment at 1776 to 1785 is 5 X 2 AA tandem repeats of G-T; it reads GTGTGTGTGT. N-linked (GlcNAc...) asparagine glycosylation is found at Asn-1791 and Asn-1804. Over residues 1799-1808 the composition is skewed to low complexity; that stretch reads GNTNSNGTGN. Helical transmembrane passes span 1830–1850, 1856–1876, 1914–1934, 1940–1960, and 1976–1996; these read LVVMTLLAVSVLGLHCSTVFT, LNVVLYSFIGVLGLLLHYIVP, LYIYLSVLERNVLFPLLAISS, QLIVAKFGLPWGTLIVAICAL, and IIIFTVLLFRIDFAMATETFI. The tract at residues 2344–2463 is disordered; it reads SMGGAPPAQA…HSFANISRQT (120 aa). The segment covering 2346–2370 has biased composition (low complexity); that stretch reads GGAPPAQAPAAAGGASSAPATAGVA. N-linked (GlcNAc...) asparagine glycans are attached at residues Asn-2380 and Asn-2387. The segment covering 2389–2411 has biased composition (low complexity); it reads SAHGGQAGPSSGQSKSQSQQQLR. The span at 2437–2447 shows a compositional bias: gly residues; sequence GTGGVTGGGGD. A compositionally biased stretch (polar residues) spans 2449 to 2463; sequence QLSSSHSFANISRQT. N-linked (GlcNAc...) asparagine glycans are attached at residues Asn-2458, Asn-2619, and Asn-2717. Disordered regions lie at residues 2908–2997 and 3198–3242; these read LNRE…SSGS and ESST…GDDG. The segment covering 2940 to 2956 has biased composition (basic and acidic residues); sequence RRPEVGSSRGRDHERRA. An N-linked (GlcNAc...) asparagine glycan is attached at Asn-3246. The interval 3295 to 3413 is disordered; sequence AEESKEKGTA…NGESEAGTTV (119 aa). Positions 3310-3323 are enriched in acidic residues; it reads EGEEGVGEMEIEPE. Residues 3364–3377 are compositionally biased toward low complexity; that stretch reads TSSTSSAKSTSSPS. Residues 3380-3406 show a composition bias toward acidic residues; it reads QEEEDAVDPEETPELASEESPSDENGE.

This sequence belongs to the pecanex family.

It is found in the membrane. In terms of biological role, involved in neurogenesis. This is Protein pecanex (pcx) from Drosophila melanogaster (Fruit fly).